A 1399-amino-acid polypeptide reads, in one-letter code: DNA-directed RNA polymerase subunit beta' (1399 aa).

4 residues coordinate Zn(2+): Cys70, Cys72, Cys85, and Cys88. Asp460, Asp462, and Asp464 together coordinate Mg(2+). Residues Cys814, Cys888, Cys895, and Cys898 each contribute to the Zn(2+) site.

It belongs to the RNA polymerase beta' chain family. In terms of assembly, the RNAP catalytic core consists of 2 alpha, 1 beta, 1 beta' and 1 omega subunit. When a sigma factor is associated with the core the holoenzyme is formed, which can initiate transcription. The cofactor is Mg(2+). Zn(2+) serves as cofactor.

The catalysed reaction is RNA(n) + a ribonucleoside 5'-triphosphate = RNA(n+1) + diphosphate. DNA-dependent RNA polymerase catalyzes the transcription of DNA into RNA using the four ribonucleoside triphosphates as substrates. The protein is DNA-directed RNA polymerase subunit beta' of Pseudomonas syringae pv. syringae (strain B728a).